The sequence spans 75 residues: Bacteriocin lactococcin-A (75 aa).

Positions 1–21 (MKNQLNFNIVSDEELSEANGG) are excised as a propeptide. Residues 30 to 52 (AAGDLYYNTNTHKYVYQQTQNAF) traverse the membrane as a helical segment.

The protein localises to the secreted. The protein resides in the host cell membrane. In terms of biological role, kills Lactococci. The protein is Bacteriocin lactococcin-A (lcnA) of Lactococcus lactis subsp. cremoris (Streptococcus cremoris).